We begin with the raw amino-acid sequence, 269 residues long: Protein RKD1 (269 aa).

Residues 106–195 (TTTTKKRRCR…EKMEGEENED (90 aa)) form the RWP-RK domain. Residues 175–216 (LQKLISNVKELEKMEGEENEDKLRNALEKLEKEKKTIEKLPD) adopt a coiled-coil conformation. Residues 230–269 (CFKANHKRKRRSGMSTPITSSSSSASASSSSYSSVSGFER) are disordered. Residues 249-269 (SSSSSASASSSSYSSVSGFER) are compositionally biased toward low complexity.

It localises to the nucleus. Its function is as follows. Putative transcription factor. This is Protein RKD1 (RKD1) from Arabidopsis thaliana (Mouse-ear cress).